A 102-amino-acid polypeptide reads, in one-letter code: Small ribosomal subunit protein uS10 (102 aa).

This sequence belongs to the universal ribosomal protein uS10 family. As to quaternary structure, part of the 30S ribosomal subunit.

Involved in the binding of tRNA to the ribosomes. In Methylobacillus flagellatus (strain ATCC 51484 / DSM 6875 / VKM B-1610 / KT), this protein is Small ribosomal subunit protein uS10.